Here is a 394-residue protein sequence, read N- to C-terminus: Tubulin-like protein CetZ5 (394 aa).

GTP is bound by residues 10-14 (QAGGN), 110-112 (GTG), Glu-142, Asn-169, and Asn-187.

This sequence belongs to the CetZ family.

Its subcellular location is the cytoplasm. Involved in cell shape control. The sequence is that of Tubulin-like protein CetZ5 from Haloferax volcanii (strain ATCC 29605 / DSM 3757 / JCM 8879 / NBRC 14742 / NCIMB 2012 / VKM B-1768 / DS2) (Halobacterium volcanii).